The following is an 872-amino-acid chain: Cellulose synthase catalytic subunit [UDP-forming] (872 aa).

4 consecutive transmembrane segments (helical) span residues 30 to 50 (SAFS…FIPL), 151 to 171 (ILGI…TQPF), 173 to 193 (PLAQ…VRRM), and 230 to 250 (LVCG…LVLG). Residues 271–364 (LWPSVDIFVP…FVSIFDCDHV (94 aa)) are catalytic subdomain A. Asp313 is a catalytic residue. Substrate contacts are provided by Asp360 and Asp362. Positions 441 to 501 (KPLDEIGGIA…GQRIRWARGM (61 aa)) are catalytic subdomain B. The active site involves Asp457. A run of 5 helical transmembrane segments spans residues 525 to 545 (VNAM…TAPL), 547 to 567 (FLLL…LFVL), 592 to 612 (IYET…LINP), 640 to 660 (IFLV…YFYG), and 668 to 688 (VVVS…AVAV). The PilZ domain occupies 694-790 (QVRRSHRVEM…QHIDFVQCTF (97 aa)). Residues 833 to 853 (SVKGIFRVLTSLVSWVVSFIP) traverse the membrane as a helical segment.

Belongs to the glycosyltransferase 2 family. The cofactor is Mg(2+).

Its subcellular location is the cell inner membrane. The catalysed reaction is [(1-&gt;4)-beta-D-glucosyl](n) + UDP-alpha-D-glucose = [(1-&gt;4)-beta-D-glucosyl](n+1) + UDP + H(+). Its pathway is glycan metabolism; bacterial cellulose biosynthesis. Activated by bis-(3'-5') cyclic diguanylic acid (c-di-GMP). In terms of biological role, catalytic subunit of cellulose synthase. It polymerizes uridine 5'-diphosphate glucose to cellulose, which is produced as an extracellular component for mechanical and chemical protection at the onset of the stationary phase, when the cells exhibit multicellular behavior (rdar morphotype). Coexpression of cellulose and thin aggregative fimbriae (curli fimbrae or fibers) leads to a hydrophobic network with tightly packed cells embedded in a highly inert matrix that confers cohesion, elasticity and tissue-like properties to colonies. The protein is Cellulose synthase catalytic subunit [UDP-forming] (bcsA) of Escherichia coli (strain K12).